Here is a 174-residue protein sequence, read N- to C-terminus: Crossover junction endodeoxyribonuclease RuvC (174 aa).

Active-site residues include Asp8, Glu67, and Asp139. 3 residues coordinate Mg(2+): Asp8, Glu67, and Asp139.

Belongs to the RuvC family. Homodimer which binds Holliday junction (HJ) DNA. The HJ becomes 2-fold symmetrical on binding to RuvC with unstacked arms; it has a different conformation from HJ DNA in complex with RuvA. In the full resolvosome a probable DNA-RuvA(4)-RuvB(12)-RuvC(2) complex forms which resolves the HJ. It depends on Mg(2+) as a cofactor.

The protein resides in the cytoplasm. It catalyses the reaction Endonucleolytic cleavage at a junction such as a reciprocal single-stranded crossover between two homologous DNA duplexes (Holliday junction).. The RuvA-RuvB-RuvC complex processes Holliday junction (HJ) DNA during genetic recombination and DNA repair. Endonuclease that resolves HJ intermediates. Cleaves cruciform DNA by making single-stranded nicks across the HJ at symmetrical positions within the homologous arms, yielding a 5'-phosphate and a 3'-hydroxyl group; requires a central core of homology in the junction. The consensus cleavage sequence is 5'-(A/T)TT(C/G)-3'. Cleavage occurs on the 3'-side of the TT dinucleotide at the point of strand exchange. HJ branch migration catalyzed by RuvA-RuvB allows RuvC to scan DNA until it finds its consensus sequence, where it cleaves and resolves the cruciform DNA. This chain is Crossover junction endodeoxyribonuclease RuvC, found in Pseudomonas syringae pv. syringae (strain B728a).